The following is a 73-amino-acid chain: Small, acid-soluble spore protein C2 (73 aa).

It belongs to the alpha/beta-type SASP family.

Functionally, SASP are bound to spore DNA. They are double-stranded DNA-binding proteins that cause DNA to change to an a-like conformation. They protect the DNA backbone from chemical and enzymatic cleavage and are thus involved in dormant spore's high resistance to UV light. This is Small, acid-soluble spore protein C2 (SASP-C2) from Priestia megaterium (Bacillus megaterium).